Reading from the N-terminus, the 588-residue chain is Urease subunit alpha (588 aa).

The Urease domain maps to 149–588 (GGIDTHIHFI…LPMAQRYFLF (440 aa)). Ni(2+) is bound by residues H154, H156, and K237. K237 carries the post-translational modification N6-carboxylysine. H239 is a substrate binding site. The Ni(2+) site is built by H266 and H292. Catalysis depends on H340, which acts as the Proton donor. D380 provides a ligand contact to Ni(2+).

Belongs to the metallo-dependent hydrolases superfamily. Urease alpha subunit family. Heterotrimer of UreA (gamma), UreB (beta) and UreC (alpha) subunits. Three heterotrimers associate to form the active enzyme. Requires Ni cation as cofactor. In terms of processing, carboxylation allows a single lysine to coordinate two nickel ions.

It is found in the cytoplasm. It catalyses the reaction urea + 2 H2O + H(+) = hydrogencarbonate + 2 NH4(+). The protein operates within nitrogen metabolism; urea degradation; CO(2) and NH(3) from urea (urease route): step 1/1. This chain is Urease subunit alpha, found in Opitutus terrae (strain DSM 11246 / JCM 15787 / PB90-1).